Reading from the N-terminus, the 227-residue chain is PKHD-type hydroxylase Caul_0045 (227 aa).

Positions 78 to 178 (TILSPLFNRY…RTASFFWIQS (101 aa)) constitute a Fe2OG dioxygenase domain. Residues His96, Asp98, and His159 each contribute to the Fe cation site. Position 169 (Arg169) interacts with 2-oxoglutarate.

Fe(2+) serves as cofactor. Requires L-ascorbate as cofactor.

This Caulobacter sp. (strain K31) protein is PKHD-type hydroxylase Caul_0045.